A 564-amino-acid chain; its full sequence is Probable diguanylate cyclase DgcQ (564 aa).

Transmembrane regions (helical) follow at residues 20 to 40 (LGPG…STLL) and 360 to 380 (IALT…WYVI). Positions 428-563 (HPFSVIQVDL…GRNRVFASDN (136 aa)) constitute a GGDEF domain. Residue Asp436 participates in Mg(2+) binding. Positions 444, 449, and 453 each coordinate substrate. Residue Glu479 participates in Mg(2+) binding. The active-site Proton acceptor is the Glu479.

Homodimer. Requires Mg(2+) as cofactor.

It is found in the cell inner membrane. It catalyses the reaction 2 GTP = 3',3'-c-di-GMP + 2 diphosphate. It participates in glycan metabolism; bacterial cellulose biosynthesis. The protein operates within purine metabolism; 3',5'-cyclic di-GMP biosynthesis. Functionally, catalyzes the synthesis of cyclic-di-GMP (c-di-GMP) via the condensation of 2 GTP molecules. Cyclic-di-GMP is a second messenger which controls cell surface-associated traits in bacteria. Involved in the regulation of cellulose production. The protein is Probable diguanylate cyclase DgcQ of Escherichia coli O157:H7.